Here is a 299-residue protein sequence, read N- to C-terminus: Taste receptor type 2 member 4 (299 aa).

Over 1 to 9 (MLRLFYFSA) the chain is Extracellular. Residues 10-30 (VIASVILNFVGIIMNLFITVV) traverse the membrane as a helical segment. At 31-46 (NCKTWVKSHRISSSDR) the chain is on the cytoplasmic side. A helical membrane pass occupies residues 47-67 (ILFSLGITRFLMLGLFLVNTI). Over 68 to 81 (YFVSSNMERSVYLS) the chain is Extracellular. Residues 82-102 (AFFVLCFMFLDSSSLWFVTLL) form a helical membrane-spanning segment. The Cytoplasmic portion of the chain corresponds to 103–131 (NILYCVKITNFQHSVFLLLKRSISPKIPR). Residues 132–152 (LLLAFVLISAFTTCLYITLSQ) traverse the membrane as a helical segment. Topologically, residues 153–172 (ASPFPELVTTRNNTSFNISE) are extracellular. N-linked (GlcNAc...) asparagine glycans are attached at residues asparagine 164, asparagine 165, and asparagine 169. Residues 173–193 (GILSLVVSLVLSSSLQFIINV) form a helical membrane-spanning segment. The Cytoplasmic segment spans residues 194–230 (TSASLLIHSLRRHIQKMQKNATGFWNPQMEAHVGAMK). The chain crosses the membrane as a helical span at residues 231-251 (LMVYFLILYIPYSVATLVQYL). The Extracellular segment spans residues 252 to 262 (PFYAGMDMGTK). Residues 263 to 283 (SICLIFATLYSPGHSVLIIIT) form a helical membrane-spanning segment. Residues 284–299 (HPKLKTTAKKILCFKK) are Cytoplasmic-facing.

The protein belongs to the G-protein coupled receptor T2R family.

The protein localises to the membrane. It localises to the cell projection. The protein resides in the cilium membrane. Functionally, gustducin-coupled receptor implicated in the perception of bitter compounds in the oral cavity and the gastrointestinal tract. Signals through PLCB2 and the calcium-regulated cation channel TRPM5. In airway epithelial cells, binding of denatonium increases the intracellular calcium ion concentration and stimulates ciliary beat frequency. This chain is Taste receptor type 2 member 4 (TAS2R4), found in Gorilla gorilla gorilla (Western lowland gorilla).